Here is a 53-residue protein sequence, read N- to C-terminus: UPF0391 membrane protein gsr2640 (53 aa).

2 helical membrane-spanning segments follow: residues 4 to 24 (LLWL…GGVV) and 32 to 49 (WFLI…FVTG).

The protein belongs to the UPF0391 family.

It localises to the cell membrane. The chain is UPF0391 membrane protein gsr2640 from Gloeobacter violaceus (strain ATCC 29082 / PCC 7421).